A 234-amino-acid polypeptide reads, in one-letter code: 2-hydroxy-3-keto-5-methylthiopentenyl-1-phosphate phosphatase (234 aa).

Belongs to the HAD-like hydrolase superfamily. MtnX family.

It carries out the reaction 2-hydroxy-5-methylsulfanyl-3-oxopent-1-enyl phosphate + H2O = 1,2-dihydroxy-5-(methylsulfanyl)pent-1-en-3-one + phosphate. The protein operates within amino-acid biosynthesis; L-methionine biosynthesis via salvage pathway; L-methionine from S-methyl-5-thio-alpha-D-ribose 1-phosphate: step 4/6. In terms of biological role, dephosphorylates 2-hydroxy-3-keto-5-methylthiopentenyl-1-phosphate (HK-MTPenyl-1-P) yielding 1,2-dihydroxy-3-keto-5-methylthiopentene (DHK-MTPene). This is 2-hydroxy-3-keto-5-methylthiopentenyl-1-phosphate phosphatase from Bacillus velezensis (strain DSM 23117 / BGSC 10A6 / LMG 26770 / FZB42) (Bacillus amyloliquefaciens subsp. plantarum).